Here is a 276-residue protein sequence, read N- to C-terminus: Non-heme chloroperoxidase (276 aa).

Positions 24-254 (PVVFHHGWPL…NATLKSYEGL (231 aa)) constitute an AB hydrolase-1 domain. Residues Ser-97, Asp-227, and His-256 contribute to the active site.

This sequence belongs to the AB hydrolase superfamily. Bacterial non-heme haloperoxidase / perhydrolase family. In terms of assembly, homodimer.

The polypeptide is Non-heme chloroperoxidase (cpo) (Streptomyces lividans).